The chain runs to 161 residues: MTELKIKTEKVVKQLTKESLKSVLKIPKEKIDSVSKFYATGKRKNAIARVWLKVGKGKIVVNNKILNQYFPSETYVKTILQPFILTKTIDQYDVICTVKGGGISGQKGAILHGISKALDKSAPCFHAILRKGGLLTRDSRVVERKKYGQRKARKKTQFSKR.

The protein belongs to the universal ribosomal protein uS9 family.

The polypeptide is Small ribosomal subunit protein uS9 (rpsI) (Rickettsia prowazekii (strain Madrid E)).